The primary structure comprises 328 residues: Probable cell division protein WhiA (328 aa).

A DNA-binding region (H-T-H motif) is located at residues 275-308; sequence SLEELGQLASPPMTKDAVAGRIRRLLSMADKRAE.

This sequence belongs to the WhiA family.

Involved in cell division and chromosome segregation. This chain is Probable cell division protein WhiA, found in Corynebacterium urealyticum (strain ATCC 43042 / DSM 7109).